A 397-amino-acid polypeptide reads, in one-letter code: Acetate kinase (397 aa).

Position 8 (N8) interacts with Mg(2+). Position 15 (K15) interacts with ATP. R89 is a binding site for substrate. The active-site Proton donor/acceptor is the D146. ATP is bound by residues H206–G210, D281–R283, and G329–N333. Residue E382 participates in Mg(2+) binding.

This sequence belongs to the acetokinase family. Homodimer. Requires Mg(2+) as cofactor. It depends on Mn(2+) as a cofactor.

Its subcellular location is the cytoplasm. It carries out the reaction acetate + ATP = acetyl phosphate + ADP. The protein operates within metabolic intermediate biosynthesis; acetyl-CoA biosynthesis; acetyl-CoA from acetate: step 1/2. In terms of biological role, catalyzes the formation of acetyl phosphate from acetate and ATP. Can also catalyze the reverse reaction. In Bacillus cereus (strain ATCC 14579 / DSM 31 / CCUG 7414 / JCM 2152 / NBRC 15305 / NCIMB 9373 / NCTC 2599 / NRRL B-3711), this protein is Acetate kinase.